We begin with the raw amino-acid sequence, 66 residues long: Small vasohibin-binding protein (66 aa).

The segment covering 1-23 (MDPPARKEKTKVKESVSRVEKAK) has biased composition (basic and acidic residues). Residues 1 to 31 (MDPPARKEKTKVKESVSRVEKAKQKSAQQEL) are disordered. A coiled-coil region spans residues 5 to 52 (ARKEKTKVKESVSRVEKAKQKSAQQELKQRQRAEIYALNRVMTELEQQ).

The protein belongs to the SVBP family. As to quaternary structure, interacts with VASH1 and VASH2.

It is found in the cytoplasm. The protein resides in the secreted. The protein localises to the cytoskeleton. Its function is as follows. Enhances the tyrosine carboxypeptidase activity of VASH1 and VASH2, thereby promoting the removal of the C-terminal tyrosine residue of alpha-tubulin. This activity is critical for spindle function and accurate chromosome segregation during mitosis since microtubule detyronisation regulates mitotic spindle length and postioning. Also required to enhance the solubility and secretion of VASH1 and VASH2. Plays a role in axon and excitatory synapse formation. The protein is Small vasohibin-binding protein of Homo sapiens (Human).